A 141-amino-acid chain; its full sequence is Transcriptional regulator MraZ (141 aa).

2 consecutive SpoVT-AbrB domains span residues 5–47 (EFEH…PAER) and 76–119 (AAEC…GAEH).

Belongs to the MraZ family. As to quaternary structure, forms oligomers.

It localises to the cytoplasm. The protein localises to the nucleoid. In Lactiplantibacillus plantarum (strain ATCC BAA-793 / NCIMB 8826 / WCFS1) (Lactobacillus plantarum), this protein is Transcriptional regulator MraZ.